The sequence spans 33 residues: Zinc metalloproteinase-disintegrin-like moojenin (33 aa).

Residues 8–33 (PPVCGNELLEVGEECDCGTPENCQNE) enclose the Disintegrin domain. Ca(2+)-binding residues include Val-10, Asn-13, Leu-15, Glu-17, Glu-20, and Asp-23. Cystine bridges form between Cys-11–Cys-30 and Cys-24–Cys-30.

This sequence belongs to the venom metalloproteinase (M12B) family. P-III subfamily. P-IIIb sub-subfamily. Monomer. Requires Zn(2+) as cofactor. The N-terminus (from the N-terminal region of the metalloproteinase domain) is blocked. In terms of tissue distribution, expressed by the venom gland.

It is found in the secreted. Its activity is regulated as follows. The fibrinogenolytic and coagulant activities of the moojenin were abolished by preincubation with EDTA, 1,10-phenanthroline and beta-mercaptoethanol. Metalloproteinase moojenin: snake venom metalloproteinase that cleaves both alpha- and beta-chains of fibrinogen, but not the gamma-chain. Shows a coagulant activity on bovine plasma about 3.1 fold lower than crude venom. Renders the blood incoagulable when intraperitoneally administered into mice. Induces necrosis in liver and muscle, but does not cause histological alterations in mouse lungs, kidney or heart. In Bothrops moojeni (Lance-headed viper), this protein is Zinc metalloproteinase-disintegrin-like moojenin.